The sequence spans 35 residues: MRIAKIGVIALFLFMAFGGIGGVMLAGYTFILRAG.

Residues Ile6–Ala26 form a helical membrane-spanning segment.

Belongs to the UPF0387 family.

It is found in the cell inner membrane. In Escherichia coli O8 (strain IAI1), this protein is UPF0387 membrane protein YohO.